A 196-amino-acid polypeptide reads, in one-letter code: MQSFIAKQLQDHLALFQKMEAELTAPVAELAERLIETFKIGNKLLIMGNGGSAADAQHFAGEIVSRFRIERPGLPAIALSTDTSIITAIGNDYGFERIFSRQVEALAVPGDAVIGISTSGNSPNVQKALEVARQAGCTTIGLLGKDGGSIKAVCDIPLIIPSNDTPRVQEGHIAVIHILCDLIEQGLFGIFAGEGR.

The SIS domain occupies 34–193 (LIETFKIGNK…EQGLFGIFAG (160 aa)). Residue 49-51 (NGG) coordinates substrate. Residues His-58 and Glu-62 each coordinate Zn(2+). Substrate is bound by residues Glu-62, 91–92 (ND), 117–119 (STS), Ser-122, and Gln-169. The Zn(2+) site is built by Gln-169 and His-177.

It belongs to the SIS family. GmhA subfamily. In terms of assembly, homotetramer. The cofactor is Zn(2+).

The protein resides in the cytoplasm. The catalysed reaction is 2 D-sedoheptulose 7-phosphate = D-glycero-alpha-D-manno-heptose 7-phosphate + D-glycero-beta-D-manno-heptose 7-phosphate. The protein operates within carbohydrate biosynthesis; D-glycero-D-manno-heptose 7-phosphate biosynthesis; D-glycero-alpha-D-manno-heptose 7-phosphate and D-glycero-beta-D-manno-heptose 7-phosphate from sedoheptulose 7-phosphate: step 1/1. In terms of biological role, catalyzes the isomerization of sedoheptulose 7-phosphate in D-glycero-D-manno-heptose 7-phosphate. This chain is Phosphoheptose isomerase, found in Trichlorobacter lovleyi (strain ATCC BAA-1151 / DSM 17278 / SZ) (Geobacter lovleyi).